Reading from the N-terminus, the 210-residue chain is Orotate phosphoribosyltransferase (210 aa).

Residues arginine 94, lysine 98, histidine 100, and 120 to 128 (EDLISTGGS) each bind 5-phospho-alpha-D-ribose 1-diphosphate. Serine 124 lines the orotate pocket.

This sequence belongs to the purine/pyrimidine phosphoribosyltransferase family. PyrE subfamily. Homodimer. The cofactor is Mg(2+).

It carries out the reaction orotidine 5'-phosphate + diphosphate = orotate + 5-phospho-alpha-D-ribose 1-diphosphate. It functions in the pathway pyrimidine metabolism; UMP biosynthesis via de novo pathway; UMP from orotate: step 1/2. Functionally, catalyzes the transfer of a ribosyl phosphate group from 5-phosphoribose 1-diphosphate to orotate, leading to the formation of orotidine monophosphate (OMP). The sequence is that of Orotate phosphoribosyltransferase from Bacillus cytotoxicus (strain DSM 22905 / CIP 110041 / 391-98 / NVH 391-98).